The sequence spans 114 residues: Amphinase-1 (114 aa).

Catalysis depends on His-15, which acts as the Proton acceptor. 4 disulfide bridges follow: Cys-26–Cys-79, Cys-41–Cys-85, Cys-59–Cys-100, and Cys-97–Cys-114. A glycan (N-linked (GlcNAc...) asparagine) is linked at Asn-27. 42 to 46 (KPVNT) is a binding site for substrate. Asn-67 and Asn-91 each carry an N-linked (GlcNAc...) asparagine glycan. The active-site Proton donor is the His-107.

The protein belongs to the pancreatic ribonuclease family. Monomer. Post-translationally, there are at least five different forms arising from glycan heterogeneity.

It is found in the secreted. Functionally, endonuclease, hydrolyzes highly polymerized RNA, poly(U) and poly(C), and the dinucleotides CpA and UpA. More active towards rCA than rUA or rUG. Has cytotoxic activity against cultured human submaxillary gland carcinoma cells. The polypeptide is Amphinase-1 (Lithobates pipiens (Northern leopard frog)).